A 395-amino-acid polypeptide reads, in one-letter code: MIVTPKFRGFICTTSHPVGCEYSVMNQVEYIKNQKKINGAKKVLVIGASTGYGLASRITAAFGCGAATIGIFFERPGSKNKTASAGWYNSAAFEKMAKEEGLYAKSINGDAFSNEIKQKTIDLIKKDLGKVDMVVYSLASPRRTHPVTGEVFNSVIKPIREAYTSKTVDFHTQLVSETTIEPASDDEIRQTIAVMGGEDWSMWMDALKKADVLEDNVMTLAYSYVGPEVTHSVYREGTIGKAKDDLEATAIKINENLRTIGGKAYVSINKAVVTQASAAIPVISLYVSALFKVMKEKNIHEGCIEQMYRMFNDRLYSGDLKLDSKGRICMDDLEMRPEVQNEVTKLWNEANNDNVKDITDIEGYRREFFRLFGFEFEDVDYNADVDIEVNIEGLY.

NAD(+) contacts are provided by residues 47 to 52 (GASTGY), 73 to 74 (FE), 110 to 111 (DA), and 138 to 139 (LA). Tyr-224 is a binding site for substrate. Tyr-234 acts as the Proton donor in catalysis. Residues Lys-243 and 272–274 (VVT) contribute to the NAD(+) site.

The protein belongs to the TER reductase family. Monomer.

The enzyme catalyses a 2,3-saturated acyl-CoA + NAD(+) = a (2E)-enoyl-CoA + NADH + H(+). Its pathway is lipid metabolism; fatty acid biosynthesis. Involved in the fatty acid synthesis (FAS II). Catalyzes the reduction of a carbon-carbon double bond in an enoyl moiety that is covalently linked to a coenzyme A (CoA). This chain is Trans-2-enoyl-CoA reductase [NADH], found in Ruminiclostridium cellulolyticum (strain ATCC 35319 / DSM 5812 / JCM 6584 / H10) (Clostridium cellulolyticum).